The following is a 235-amino-acid chain: MKLLIDVGNTSLKAKLWQNEQVQACDLNNLPWHAITHVIYACVGRSELLNAILAQAAFNSISCFEAKVTKTLGGLTCAYEHFNNLGIDRWLALIASFTLYPNKACIVVDAGTATTIDVLNCDGQHLGGWILPGLDLMTRSLTQNTQRVFDDENTPFTNQLGINTPNGLKNGALVATIGAINQAKPYLNDKNTQIIFAGGYGSLLQQQFKESIFDPMLVIKGLNYWYELDENSNKL.

ATP is bound at residue 6-13; sequence DVGNTSLK. Substrate contacts are provided by residues Y79 and 86 to 89; that span reads GIDR. The Proton acceptor role is filled by D88. D109 is a K(+) binding site. Residue T112 participates in ATP binding. Residue T164 participates in substrate binding.

This sequence belongs to the type III pantothenate kinase family. In terms of assembly, homodimer. NH4(+) is required as a cofactor. It depends on K(+) as a cofactor.

Its subcellular location is the cytoplasm. The catalysed reaction is (R)-pantothenate + ATP = (R)-4'-phosphopantothenate + ADP + H(+). It participates in cofactor biosynthesis; coenzyme A biosynthesis; CoA from (R)-pantothenate: step 1/5. Catalyzes the phosphorylation of pantothenate (Pan), the first step in CoA biosynthesis. This Pseudoalteromonas translucida (strain TAC 125) protein is Type III pantothenate kinase.